Here is a 545-residue protein sequence, read N- to C-terminus: CTP synthase (545 aa).

The segment at 1 to 266 is amidoligase domain; sequence MTTNYIFVTG…DDYICKRFSL (266 aa). Serine 14 lines the CTP pocket. A UTP-binding site is contributed by serine 14. Residues 15–20 and aspartate 72 contribute to the ATP site; that span reads SLGKGI. 2 residues coordinate Mg(2+): aspartate 72 and glutamate 140. Residues 147–149, 187–192, and lysine 223 each bind CTP; these read DIE and KTKPTQ. UTP-binding positions include 187-192 and lysine 223; that span reads KTKPTQ. ATP is bound at residue 239-241; sequence KDV. The Glutamine amidotransferase type-1 domain maps to 291–542; sequence TIGMVGKYIE…VKAASEHQKR (252 aa). Glycine 352 provides a ligand contact to L-glutamine. Cysteine 379 (nucleophile; for glutamine hydrolysis) is an active-site residue. Residues 380 to 383, glutamate 403, and arginine 470 contribute to the L-glutamine site; that span reads LGMQ. Active-site residues include histidine 515 and glutamate 517.

It belongs to the CTP synthase family. In terms of assembly, homotetramer.

It catalyses the reaction UTP + L-glutamine + ATP + H2O = CTP + L-glutamate + ADP + phosphate + 2 H(+). The catalysed reaction is L-glutamine + H2O = L-glutamate + NH4(+). The enzyme catalyses UTP + NH4(+) + ATP = CTP + ADP + phosphate + 2 H(+). It participates in pyrimidine metabolism; CTP biosynthesis via de novo pathway; CTP from UDP: step 2/2. Allosterically activated by GTP, when glutamine is the substrate; GTP has no effect on the reaction when ammonia is the substrate. The allosteric effector GTP functions by stabilizing the protein conformation that binds the tetrahedral intermediate(s) formed during glutamine hydrolysis. Inhibited by the product CTP, via allosteric rather than competitive inhibition. Functionally, catalyzes the ATP-dependent amination of UTP to CTP with either L-glutamine or ammonia as the source of nitrogen. Regulates intracellular CTP levels through interactions with the four ribonucleotide triphosphates. The chain is CTP synthase from Salmonella arizonae (strain ATCC BAA-731 / CDC346-86 / RSK2980).